The sequence spans 511 residues: Mesoderm induction early response protein 1 (511 aa).

Residues 1-16 (MAEPSVESSSPGGSAT) are compositionally biased toward low complexity. Residues 1–171 (MAEPSVESSS…EEESEEDEDY (171 aa)) form a disordered region. A Phosphoserine modification is found at S10. Residues 17–36 (SEDHEFDPSADMLVHDFDDE) are compositionally biased toward basic and acidic residues. Over residues 37–46 (RTLEEEEMME) the composition is skewed to acidic residues. The segment covering 57-66 (DLAREGDMPI) has biased composition (basic and acidic residues). The span at 83 to 104 (EEEEEEEEEEEGEDDEDADNDD) shows a compositional bias: acidic residues. The segment covering 128–143 (QSSNDDPSQSVTSQDA) has biased composition (polar residues). Phosphoserine is present on S140. Phosphotyrosine is present on Y154. 2 positions are modified to phosphoserine: S159 and S165. The span at 159-171 (SEIEEESEEDEDY) shows a compositional bias: acidic residues. The ELM2 domain occupies 179–277 (KEIMVGSMFQ…EALRRLRFNV (99 aa)). K238 participates in a covalent cross-link: Glycyl lysine isopeptide (Lys-Gly) (interchain with G-Cter in SUMO2). The SANT domain occupies 282–334 (EELSVWTEEECRNFEQGLKAYGKDFHLIQANKVRTRSVGECVAFYYMWKKSER). The interval 365 to 511 (ESESAASSRA…KFEEHENTND (147 aa)) is disordered. A phosphoserine mark is found at S366, S368, and S376. Over residues 397-408 (SSRNQNGVSSNG) the composition is skewed to polar residues. 2 stretches are compositionally biased toward basic and acidic residues: residues 413 to 422 (LNKEEVKVEG) and 461 to 474 (ARNENDFDEKNERP). K419 participates in a covalent cross-link: Glycyl lysine isopeptide (Lys-Gly) (interchain with G-Cter in SUMO2). The span at 481–493 (NSSGKESPGSSEF) shows a compositional bias: polar residues. S482, S487, and S490 each carry phosphoserine. Over residues 499 to 511 (SHGKFEEHENTND) the composition is skewed to basic and acidic residues.

In terms of assembly, interacts with HDAC1. Part of a complex containing at least CDYL, MIER1, MIER2, HDAC1 and HDAC2. As to expression, ubiquitously expressed. Isoform 1 is only expressed in testis.

It localises to the nucleus. In terms of biological role, transcriptional repressor regulating the expression of a number of genes including SP1 target genes. Probably functions through recruitment of HDAC1 a histone deacetylase involved in chromatin silencing. The protein is Mesoderm induction early response protein 1 (Mier1) of Mus musculus (Mouse).